We begin with the raw amino-acid sequence, 208 residues long: MDDNKISLATTRRLPLYYRCLSELNEKGEDKVSSAVLERLLKIDAATVRRDFSYFGQMGRRGYGYDVKILLELFNDVLKQDTAANVAIVGVGNLGHALINFKFHKTGNARIKMAFDVNPEVVGTIQSEVPVYDINEIKQRVRDEKIEVAILTVPNSQAQRVTDLLVEAGIKGIMNFTTEIIDVPYNVTIHDVDLSLELQALIYSMDQD.

The H-T-H motif DNA-binding region spans 16–55 (LYYRCLSELNEKGEDKVSSAVLERLLKIDAATVRRDFSYF). 90–95 (GVGNLG) is a binding site for NAD(+).

Belongs to the transcriptional regulatory Rex family. Homodimer.

Its subcellular location is the cytoplasm. Functionally, modulates transcription in response to changes in cellular NADH/NAD(+) redox state. The sequence is that of Redox-sensing transcriptional repressor Rex from Pediococcus pentosaceus (strain ATCC 25745 / CCUG 21536 / LMG 10740 / 183-1w).